A 404-amino-acid chain; its full sequence is Cytoplasmic tRNA 2-thiolation protein 2 (404 aa).

Belongs to the CTU2/NCS2 family.

It is found in the cytoplasm. It participates in tRNA modification; 5-methoxycarbonylmethyl-2-thiouridine-tRNA biosynthesis. Plays a central role in 2-thiolation of mcm(5)S(2)U at tRNA wobble positions of tRNA(Lys), tRNA(Glu) and tRNA(Gln). May act by forming a heterodimer with NCS6/CTU1 that ligates sulfur from thiocarboxylated URM1 onto the uridine of tRNAs at wobble position. This is Cytoplasmic tRNA 2-thiolation protein 2 from Drosophila erecta (Fruit fly).